Reading from the N-terminus, the 796-residue chain is Phenylalanine--tRNA ligase beta subunit (796 aa).

Positions 39–149 (SAALKSFRVA…GDAPLGTTFA (111 aa)) constitute a tRNA-binding domain. One can recognise a B5 domain in the interval 398–470 (LARKALAYDP…RVHGLDAVPS (73 aa)). The Mg(2+) site is built by D448, D454, E457, and E458. The region spanning 703–795 (PALQAVTRDF…AAGKLGAELR (93 aa)) is the FDX-ACB domain.

This sequence belongs to the phenylalanyl-tRNA synthetase beta subunit family. Type 1 subfamily. In terms of assembly, tetramer of two alpha and two beta subunits. The cofactor is Mg(2+).

Its subcellular location is the cytoplasm. It catalyses the reaction tRNA(Phe) + L-phenylalanine + ATP = L-phenylalanyl-tRNA(Phe) + AMP + diphosphate + H(+). The protein is Phenylalanine--tRNA ligase beta subunit of Novosphingobium aromaticivorans (strain ATCC 700278 / DSM 12444 / CCUG 56034 / CIP 105152 / NBRC 16084 / F199).